Consider the following 683-residue polypeptide: Long-chain fatty acid transport protein 3 (683 aa).

Residues 3–23 (ALLLLPLLLLLPLLLLKLHLW) traverse the membrane as a helical segment. A compositionally biased stretch (gly residues) spans 119–128 (GGDSGEGSAG). Residues 119–145 (GGDSGEGSAGEGERAAPGAGDAAAGSG) are disordered. The span at 133-145 (AAPGAGDAAAGSG) shows a compositional bias: low complexity. ATP contacts are provided by residues 288–292 (TSGTT), H331, T428, D528, R543, and K635.

It belongs to the ATP-dependent AMP-binding enzyme family. Expressed in bronchial and bronchiolar epithelial cells (at protein level).

The protein localises to the mitochondrion membrane. It catalyses the reaction a fatty acid(in) = a fatty acid(out). It carries out the reaction a long-chain fatty acid + ATP + CoA = a long-chain fatty acyl-CoA + AMP + diphosphate. The enzyme catalyses hexadecanoate + ATP + CoA = hexadecanoyl-CoA + AMP + diphosphate. The catalysed reaction is (9Z)-octadecenoate + ATP + CoA = (9Z)-octadecenoyl-CoA + AMP + diphosphate. It catalyses the reaction (9Z,12Z)-octadecadienoate + ATP + CoA = (9Z,12Z)-octadecadienoyl-CoA + AMP + diphosphate. It carries out the reaction (5Z,8Z,11Z,14Z)-eicosatetraenoate + ATP + CoA = (5Z,8Z,11Z,14Z)-eicosatetraenoyl-CoA + AMP + diphosphate. The enzyme catalyses a very long-chain fatty acid + ATP + CoA = a very long-chain fatty acyl-CoA + AMP + diphosphate. The catalysed reaction is tetracosanoate + ATP + CoA = tetracosanoyl-CoA + AMP + diphosphate. Its function is as follows. Mainly functions as an acyl-CoA ligase catalyzing the ATP-dependent formation of fatty acyl-CoA using LCFA and very-long-chain fatty acids (VLCFA) as substrates. Can mediate the levels of long-chain fatty acids (LCFA) in the cell by facilitating their transport across membranes. This chain is Long-chain fatty acid transport protein 3, found in Homo sapiens (Human).